The primary structure comprises 475 residues: Glutamate--tRNA ligase 1 (475 aa).

The 'HIGH' region signature appears at P11–G21. Residues K240–R244 carry the 'KMSKS' region motif. K243 serves as a coordination point for ATP.

Belongs to the class-I aminoacyl-tRNA synthetase family. Glutamate--tRNA ligase type 1 subfamily. Monomer.

It localises to the cytoplasm. The enzyme catalyses tRNA(Glu) + L-glutamate + ATP = L-glutamyl-tRNA(Glu) + AMP + diphosphate. Catalyzes the attachment of glutamate to tRNA(Glu) in a two-step reaction: glutamate is first activated by ATP to form Glu-AMP and then transferred to the acceptor end of tRNA(Glu). This chain is Glutamate--tRNA ligase 1, found in Methylobacterium radiotolerans (strain ATCC 27329 / DSM 1819 / JCM 2831 / NBRC 15690 / NCIMB 10815 / 0-1).